A 355-amino-acid polypeptide reads, in one-letter code: Beta-ketoacyl-[acyl-carrier-protein] synthase III 1 (355 aa).

Active-site residues include cysteine 122 and histidine 280. An ACP-binding region spans residues 281–285 (QANER). Asparagine 311 is a catalytic residue.

Belongs to the thiolase-like superfamily. FabH family. As to quaternary structure, homodimer.

Its subcellular location is the cytoplasm. It catalyses the reaction malonyl-[ACP] + acetyl-CoA + H(+) = 3-oxobutanoyl-[ACP] + CO2 + CoA. The protein operates within lipid metabolism; fatty acid biosynthesis. Functionally, catalyzes the condensation reaction of fatty acid synthesis by the addition to an acyl acceptor of two carbons from malonyl-ACP. Catalyzes the first condensation reaction which initiates fatty acid synthesis and may therefore play a role in governing the total rate of fatty acid production. Possesses both acetoacetyl-ACP synthase and acetyl transacylase activities. Its substrate specificity determines the biosynthesis of branched-chain and/or straight-chain of fatty acids. This is Beta-ketoacyl-[acyl-carrier-protein] synthase III 1 from Streptomyces avermitilis (strain ATCC 31267 / DSM 46492 / JCM 5070 / NBRC 14893 / NCIMB 12804 / NRRL 8165 / MA-4680).